The following is a 75-amino-acid chain: Alpha-elapitoxin-Bc2c (75 aa).

A signal peptide spans 1–2; the sequence is YT. 5 disulfide bridges follow: C5–C24, C17–C45, C30–C34, C49–C60, and C61–C66.

This sequence belongs to the three-finger toxin family. Long-chain subfamily. Type II alpha-neurotoxin sub-subfamily. In terms of assembly, monomer in solution, homodimer in crystal state. As to expression, expressed by the venom gland.

It localises to the secreted. In terms of biological role, binds to muscular and neuronal nicotinic acetylcholine receptor (nAChR) and inhibits acetylcholine from binding to the receptor, thereby impairing neuromuscular and neuronal transmission. Blocks muscle type nAChR. Also binds with high affinity to alpha-7/CHRNA7 nAChRs. In addition, shows a weak inhibition of neuronal alpha-3-beta-2/CHRNA3-CHRNB2 nAChR. Selectively binds to alpha-1-delta subunit interface of the mouse muscle nicotinic acetylcholine receptor, with a 10-fold higher affinity for the adult than for the fetal receptors. In vivo, when intraperitoneally injected into mice, causes flaccid paralysis and respiratory distress, followed by death within 2-4 hours. This is Alpha-elapitoxin-Bc2c from Bungarus candidus (Malayan krait).